Here is a 367-residue protein sequence, read N- to C-terminus: ELAV-like protein 3 (367 aa).

3 RRM domains span residues 39–117 (TNLI…YARP), 125–205 (ANLY…FANN), and 284–362 (WCIF…FKTS).

It belongs to the RRM elav family. Interacts with MAP1B light chain LC1. In terms of tissue distribution, brain specific.

Its function is as follows. RNA-binding protein that binds to AU-rich element (ARE) sequences of target mRNAs, including VEGF mRNA. May also bind poly-A tracts via RRM 3. May be involved in neuronal differentiation and maintenance. Plays a role in the stabilization of GAP43 mRNA and in spatial learning. The protein is ELAV-like protein 3 (ELAVL3) of Homo sapiens (Human).